A 306-amino-acid chain; its full sequence is 4-hydroxy-3-methylbut-2-enyl diphosphate reductase (306 aa).

Residue Cys-12 participates in [4Fe-4S] cluster binding. (2E)-4-hydroxy-3-methylbut-2-enyl diphosphate is bound by residues His-41 and His-74. His-41 and His-74 together coordinate dimethylallyl diphosphate. 2 residues coordinate isopentenyl diphosphate: His-41 and His-74. Cys-96 contacts [4Fe-4S] cluster. His-124 contacts (2E)-4-hydroxy-3-methylbut-2-enyl diphosphate. His-124 lines the dimethylallyl diphosphate pocket. His-124 contributes to the isopentenyl diphosphate binding site. Catalysis depends on Glu-126, which acts as the Proton donor. Thr-164 is a binding site for (2E)-4-hydroxy-3-methylbut-2-enyl diphosphate. Cys-194 is a binding site for [4Fe-4S] cluster. Residues Ser-222, Ser-223, Asn-224, and Ser-266 each contribute to the (2E)-4-hydroxy-3-methylbut-2-enyl diphosphate site. Ser-222, Ser-223, Asn-224, and Ser-266 together coordinate dimethylallyl diphosphate. The isopentenyl diphosphate site is built by Ser-222, Ser-223, Asn-224, and Ser-266.

The protein belongs to the IspH family. The cofactor is [4Fe-4S] cluster.

The enzyme catalyses isopentenyl diphosphate + 2 oxidized [2Fe-2S]-[ferredoxin] + H2O = (2E)-4-hydroxy-3-methylbut-2-enyl diphosphate + 2 reduced [2Fe-2S]-[ferredoxin] + 2 H(+). It carries out the reaction dimethylallyl diphosphate + 2 oxidized [2Fe-2S]-[ferredoxin] + H2O = (2E)-4-hydroxy-3-methylbut-2-enyl diphosphate + 2 reduced [2Fe-2S]-[ferredoxin] + 2 H(+). It functions in the pathway isoprenoid biosynthesis; dimethylallyl diphosphate biosynthesis; dimethylallyl diphosphate from (2E)-4-hydroxy-3-methylbutenyl diphosphate: step 1/1. The protein operates within isoprenoid biosynthesis; isopentenyl diphosphate biosynthesis via DXP pathway; isopentenyl diphosphate from 1-deoxy-D-xylulose 5-phosphate: step 6/6. In terms of biological role, catalyzes the conversion of 1-hydroxy-2-methyl-2-(E)-butenyl 4-diphosphate (HMBPP) into a mixture of isopentenyl diphosphate (IPP) and dimethylallyl diphosphate (DMAPP). Acts in the terminal step of the DOXP/MEP pathway for isoprenoid precursor biosynthesis. This is 4-hydroxy-3-methylbut-2-enyl diphosphate reductase from Dechloromonas aromatica (strain RCB).